Here is a 273-residue protein sequence, read N- to C-terminus: 2,3,4,5-tetrahydropyridine-2,6-dicarboxylate N-succinyltransferase (273 aa).

Substrate-binding residues include R104 and D141.

The protein belongs to the transferase hexapeptide repeat family. In terms of assembly, homotrimer.

Its subcellular location is the cytoplasm. It carries out the reaction (S)-2,3,4,5-tetrahydrodipicolinate + succinyl-CoA + H2O = (S)-2-succinylamino-6-oxoheptanedioate + CoA. Its pathway is amino-acid biosynthesis; L-lysine biosynthesis via DAP pathway; LL-2,6-diaminopimelate from (S)-tetrahydrodipicolinate (succinylase route): step 1/3. The protein is 2,3,4,5-tetrahydropyridine-2,6-dicarboxylate N-succinyltransferase of Thioalkalivibrio sulfidiphilus (strain HL-EbGR7).